Reading from the N-terminus, the 489-residue chain is Putative (R)-citramalate synthase CimA (489 aa).

A Pyruvate carboxyltransferase domain is found at 3–255 (VKILDTTLRD…KTKIKKERLY (253 aa)).

Belongs to the alpha-IPM synthase/homocitrate synthase family. As to quaternary structure, homodimer.

It catalyses the reaction pyruvate + acetyl-CoA + H2O = (3R)-citramalate + CoA + H(+). It participates in amino-acid biosynthesis; L-isoleucine biosynthesis; 2-oxobutanoate from pyruvate: step 1/3. Catalyzes the condensation of pyruvate and acetyl-coenzyme A to form (R)-citramalate. The protein is Putative (R)-citramalate synthase CimA (cimA) of Archaeoglobus fulgidus (strain ATCC 49558 / DSM 4304 / JCM 9628 / NBRC 100126 / VC-16).